Here is a 176-residue protein sequence, read N- to C-terminus: Large ribosomal subunit protein bL17 (176 aa).

A disordered region spans residues 124–176 (AAPKAARQDRSKRVKGSRKTEASAAKAAPAAQAAPELPAESDAPAAEAAPTEE). Positions 145 to 176 (ASAAKAAPAAQAAPELPAESDAPAAEAAPTEE) are enriched in low complexity.

This sequence belongs to the bacterial ribosomal protein bL17 family. Part of the 50S ribosomal subunit. Contacts protein L32.

This is Large ribosomal subunit protein bL17 from Chlorobium phaeovibrioides (strain DSM 265 / 1930) (Prosthecochloris vibrioformis (strain DSM 265)).